The chain runs to 329 residues: Peroxidase 17 (329 aa).

The first 19 residues, 1 to 19 (MSLLPHLILYLTLLTVVVT), serve as a signal peptide directing secretion. 4 disulfide bridges follow: Cys32-Cys112, Cys65-Cys70, Cys118-Cys315, and Cys197-Cys229. The active-site Proton acceptor is the His63. Ca(2+) is bound by residues Asp64, Val67, Gly69, Asp71, and Ser73. Pro160 provides a ligand contact to substrate. Asn165 and Asn177 each carry an N-linked (GlcNAc...) asparagine glycan. Residue His190 participates in heme b binding. Ser191 serves as a coordination point for Ca(2+). Asn206 and Asn236 each carry an N-linked (GlcNAc...) asparagine glycan. Ca(2+) contacts are provided by Asp242, Thr244, and Asp249.

The protein belongs to the peroxidase family. Classical plant (class III) peroxidase subfamily. Heme b serves as cofactor. Requires Ca(2+) as cofactor.

It localises to the secreted. The protein resides in the vacuole. The catalysed reaction is 2 a phenolic donor + H2O2 = 2 a phenolic radical donor + 2 H2O. In terms of biological role, removal of H(2)O(2), oxidation of toxic reductants, biosynthesis and degradation of lignin, suberization, auxin catabolism, response to environmental stresses such as wounding, pathogen attack and oxidative stress. These functions might be dependent on each isozyme/isoform in each plant tissue. In Arabidopsis thaliana (Mouse-ear cress), this protein is Peroxidase 17 (PER17).